The chain runs to 157 residues: SsrA-binding protein (157 aa).

The disordered stretch occupies residues 133–157 (LHDKRETEKKRDWSREKGRLLRARG). A compositionally biased stretch (basic and acidic residues) spans 135–151 (DKRETEKKRDWSREKGR).

It belongs to the SmpB family.

The protein localises to the cytoplasm. Its function is as follows. Required for rescue of stalled ribosomes mediated by trans-translation. Binds to transfer-messenger RNA (tmRNA), required for stable association of tmRNA with ribosomes. tmRNA and SmpB together mimic tRNA shape, replacing the anticodon stem-loop with SmpB. tmRNA is encoded by the ssrA gene; the 2 termini fold to resemble tRNA(Ala) and it encodes a 'tag peptide', a short internal open reading frame. During trans-translation Ala-aminoacylated tmRNA acts like a tRNA, entering the A-site of stalled ribosomes, displacing the stalled mRNA. The ribosome then switches to translate the ORF on the tmRNA; the nascent peptide is terminated with the 'tag peptide' encoded by the tmRNA and targeted for degradation. The ribosome is freed to recommence translation, which seems to be the essential function of trans-translation. The polypeptide is SsrA-binding protein (Bradyrhizobium diazoefficiens (strain JCM 10833 / BCRC 13528 / IAM 13628 / NBRC 14792 / USDA 110)).